The following is a 343-amino-acid chain: Ricin B-like lectin R40G2 (343 aa).

Residues 194–340 (TVRVFSAAGE…CEGDNQRWKI (147 aa)) form the Ricin B-type lectin domain.

Functionally, lectin which binds carbohydrates in vitro. Interacts through its lectin domain with glycan structures containing specific motifs. The protein is Ricin B-like lectin R40G2 of Oryza sativa subsp. japonica (Rice).